The following is a 355-amino-acid chain: MTASVANPVYPVVWRGDHVELIDQTRLPQQFSVVEIRRSEDMATAIKTMIVRGAPAIGVAAAYGMYLGSCEVTTDNRDGFLSELAGVGDTLKATRPTAVNLFWAVDRMLKVARQTLGPISQIQDQLLTTAQEIGADDVRTCKAIGDHGLSVLPKDPEKLCLLTHCNAGALATAGYGTALGVVRSAWTAGRLARVYADETRPRLQGAKLTTWECVQEEIPVTLISDGMAAHCMQQNLIDVVVVGADRIAANGDAANKIGTYSVALCAKAHNLPFYVAAPLSTIDFDLADGGGIPIEERHPSEIYQIGTTDICPKGVEFYNPAFDVTPAELITGIITEHGVFAPGDIREKLSHHRSA.

Substrate-binding positions include 52 to 54, Arg-95, and Gln-204; that span reads RGA. Asp-245 functions as the Proton donor in the catalytic mechanism. 255–256 provides a ligand contact to substrate; that stretch reads NK.

It belongs to the eIF-2B alpha/beta/delta subunits family. MtnA subfamily.

The catalysed reaction is 5-(methylsulfanyl)-alpha-D-ribose 1-phosphate = 5-(methylsulfanyl)-D-ribulose 1-phosphate. It participates in amino-acid biosynthesis; L-methionine biosynthesis via salvage pathway; L-methionine from S-methyl-5-thio-alpha-D-ribose 1-phosphate: step 1/6. Functionally, catalyzes the interconversion of methylthioribose-1-phosphate (MTR-1-P) into methylthioribulose-1-phosphate (MTRu-1-P). In Acaryochloris marina (strain MBIC 11017), this protein is Methylthioribose-1-phosphate isomerase.